A 953-amino-acid chain; its full sequence is Translation initiation factor IF-2 (953 aa).

Disordered stretches follow at residues serine 51–lysine 242 and threonine 279–lysine 363. Composition is skewed to basic and acidic residues over residues threonine 80–glutamine 89 and phenylalanine 98–alanine 111. The span at glutamine 131 to glutamine 140 shows a compositional bias: polar residues. Residues serine 149 to lysine 188 show a composition bias toward basic and acidic residues. A compositionally biased stretch (polar residues) spans arginine 191–serine 207. Positions arginine 229 to lysine 242 are enriched in basic and acidic residues. A compositionally biased stretch (polar residues) spans lysine 282–threonine 291. The segment covering alanine 300–lysine 317 has biased composition (basic and acidic residues). Residues serine 322–asparagine 338 are compositionally biased toward low complexity. Positions lysine 339 to asparagine 348 are enriched in basic residues. Positions glutamate 454–lysine 623 constitute a tr-type G domain. Residues glycine 463–threonine 470 are G1. Position 463–470 (glycine 463–threonine 470) interacts with GTP. The tract at residues glycine 488–histidine 492 is G2. The segment at aspartate 509–glycine 512 is G3. Residues aspartate 509–histidine 513 and asparagine 563–aspartate 566 each bind GTP. Positions asparagine 563–aspartate 566 are G4. The tract at residues serine 599–lysine 601 is G5.

Belongs to the TRAFAC class translation factor GTPase superfamily. Classic translation factor GTPase family. IF-2 subfamily.

It localises to the cytoplasm. One of the essential components for the initiation of protein synthesis. Protects formylmethionyl-tRNA from spontaneous hydrolysis and promotes its binding to the 30S ribosomal subunits. Also involved in the hydrolysis of GTP during the formation of the 70S ribosomal complex. The protein is Translation initiation factor IF-2 of Streptococcus pyogenes serotype M49 (strain NZ131).